A 108-amino-acid polypeptide reads, in one-letter code: MGVQVVPIAPGDGSTYPKNGQKVTVHYTGTLDDGTKFDSSRDRNKPFKFTIGKGEVIRGWDEGVAQLSVGQRAKLICSPDYAYGSRGHPGVIPPNSTLTFDVELLKVE.

Residues 1 to 21 (MGVQVVPIAPGDGSTYPKNGQ) form a disordered region. The 89-residue stretch at 20–108 (GQKVTVHYTG…TFDVELLKVE (89 aa)) folds into the PPIase FKBP-type domain.

Belongs to the FKBP-type PPIase family. FKBP1 subfamily.

The protein localises to the cytoplasm. The enzyme catalyses [protein]-peptidylproline (omega=180) = [protein]-peptidylproline (omega=0). Functionally, PPIases accelerate the folding of proteins. It catalyzes the cis-trans isomerization of proline imidic peptide bonds in oligopeptides. Binds to ligand-free TGF beta type I receptor, from which it is released upon a ligand-induced, type II receptor mediated phosphorylation of the type I receptor. Binding is inhibitory to the signaling pathways of the TGF beta family ligands. The chain is Peptidyl-prolyl cis-trans isomerase Fkbp12 from Drosophila melanogaster (Fruit fly).